The following is a 435-amino-acid chain: NADH-quinone oxidoreductase subunit D (435 aa).

This sequence belongs to the complex I 49 kDa subunit family. NDH-1 is composed of 14 different subunits. Subunits NuoB, C, D, E, F, and G constitute the peripheral sector of the complex.

It localises to the cell inner membrane. The catalysed reaction is a quinone + NADH + 5 H(+)(in) = a quinol + NAD(+) + 4 H(+)(out). NDH-1 shuttles electrons from NADH, via FMN and iron-sulfur (Fe-S) centers, to quinones in the respiratory chain. The immediate electron acceptor for the enzyme in this species is believed to be ubiquinone. Couples the redox reaction to proton translocation (for every two electrons transferred, four hydrogen ions are translocated across the cytoplasmic membrane), and thus conserves the redox energy in a proton gradient. The polypeptide is NADH-quinone oxidoreductase subunit D (Xylella fastidiosa (strain M23)).